A 141-amino-acid chain; its full sequence is Ribonuclease VapC16 (141 aa).

Asp-99 is a Mg(2+) binding site. Residues 99–141 (DHAHTAHRRASGSPSTSIRPCAHRPGTAAWPDDHHRRRPVSCL) form a disordered region.

Belongs to the PINc/VapC protein family. Mg(2+) serves as cofactor.

Its function is as follows. Toxic component of a type II toxin-antitoxin (TA) system. An RNase. The cognate antitoxin is VapB16. In Mycobacterium tuberculosis (strain ATCC 25618 / H37Rv), this protein is Ribonuclease VapC16.